We begin with the raw amino-acid sequence, 600 residues long: Spastin (600 aa).

Positions Met-1–Pro-39 are disordered. Residues Met-1–Pro-53 lie on the Cytoplasmic side of the membrane. The segment covering Thr-15–Thr-33 has biased composition (low complexity). Residues Leu-54–Trp-74 constitute an intramembrane region (helical). At Cys-75–Val-600 the chain is on the cytoplasmic side. An MIT domain is found at Tyr-110–Leu-185. The tract at residues Gly-213–Arg-294 is disordered. Basic and acidic residues predominate over residues Lys-216–Pro-228. Positions Pro-253–Thr-291 are enriched in polar residues. Gly-366 to Thr-373 is a binding site for ATP.

Belongs to the AAA ATPase family. Spastin subfamily. In terms of assembly, homohexamer. The homohexamer is stabilized by ATP-binding. The homohexamer may adopt a ring conformation through which microtubules pass prior to being severed. Interacts with microtubules.

The protein resides in the membrane. The protein localises to the cytoplasm. It localises to the cytoskeleton. It is found in the microtubule organizing center. Its subcellular location is the centrosome. The protein resides in the perinuclear region. The protein localises to the nucleus. It carries out the reaction n ATP + n H2O + a microtubule = n ADP + n phosphate + (n+1) alpha/beta tubulin heterodimers.. In terms of biological role, ATP-dependent microtubule severing protein that specifically recognizes and cuts microtubules that are polyglutamylated. Preferentially recognizes and acts on microtubules decorated with short polyglutamate tails: severing activity increases as the number of glutamates per tubulin rises from one to eight, but decreases beyond this glutamylation threshold. Microtubule severing promotes reorganization of cellular microtubule arrays and the release of microtubules from the centrosome following nucleation. Required for membrane traffic from the endoplasmic reticulum (ER) to the Golgi and for completion of the abscission stage of cytokinesis. Also plays a role in axon growth and the formation of axonal branches. The protein is Spastin of Xenopus laevis (African clawed frog).